A 216-amino-acid chain; its full sequence is Thylakoid lumenal 16.5 kDa protein, chloroplastic (216 aa).

The N-terminal 38 residues, 1-38 (MAKSLLCSSTLNPFFSTTLSSSKKNQIAYSGNSKNQTS), are a transit peptide targeting the chloroplast. The N-terminal 35 residues, 39–73 (SSLLWKRRELSLGFMSSLVAIGLVSNDRRRHDANA), are a transit peptide targeting the thylakoid.

The protein localises to the plastid. It localises to the chloroplast thylakoid lumen. The protein is Thylakoid lumenal 16.5 kDa protein, chloroplastic of Arabidopsis thaliana (Mouse-ear cress).